The following is a 251-amino-acid chain: Imidazole glycerol phosphate synthase subunit HisF (251 aa).

Residues D11 and D130 contribute to the active site.

Belongs to the HisA/HisF family. Heterodimer of HisH and HisF.

The protein resides in the cytoplasm. The enzyme catalyses 5-[(5-phospho-1-deoxy-D-ribulos-1-ylimino)methylamino]-1-(5-phospho-beta-D-ribosyl)imidazole-4-carboxamide + L-glutamine = D-erythro-1-(imidazol-4-yl)glycerol 3-phosphate + 5-amino-1-(5-phospho-beta-D-ribosyl)imidazole-4-carboxamide + L-glutamate + H(+). It functions in the pathway amino-acid biosynthesis; L-histidine biosynthesis; L-histidine from 5-phospho-alpha-D-ribose 1-diphosphate: step 5/9. In terms of biological role, IGPS catalyzes the conversion of PRFAR and glutamine to IGP, AICAR and glutamate. The HisF subunit catalyzes the cyclization activity that produces IGP and AICAR from PRFAR using the ammonia provided by the HisH subunit. The chain is Imidazole glycerol phosphate synthase subunit HisF from Thiobacillus denitrificans (strain ATCC 25259 / T1).